The chain runs to 938 residues: Isoleucine--tRNA ligase (938 aa).

A 'HIGH' region motif is present at residues 58–68; the sequence is PYANGSIHIGH. Residue Glu561 participates in L-isoleucyl-5'-AMP binding. The short motif at 602 to 606 is the 'KMSKS' region element; sequence KMSKS. Lys605 contributes to the ATP binding site. Cys901, Cys904, Cys921, and Cys924 together coordinate Zn(2+).

Belongs to the class-I aminoacyl-tRNA synthetase family. IleS type 1 subfamily. Monomer. Zn(2+) serves as cofactor.

The protein localises to the cytoplasm. The enzyme catalyses tRNA(Ile) + L-isoleucine + ATP = L-isoleucyl-tRNA(Ile) + AMP + diphosphate. Its function is as follows. Catalyzes the attachment of isoleucine to tRNA(Ile). As IleRS can inadvertently accommodate and process structurally similar amino acids such as valine, to avoid such errors it has two additional distinct tRNA(Ile)-dependent editing activities. One activity is designated as 'pretransfer' editing and involves the hydrolysis of activated Val-AMP. The other activity is designated 'posttransfer' editing and involves deacylation of mischarged Val-tRNA(Ile). The chain is Isoleucine--tRNA ligase from Cronobacter sakazakii (strain ATCC BAA-894) (Enterobacter sakazakii).